The following is a 75-amino-acid chain: UPF0729 protein C18orf32 homolog (75 aa).

Residues 1–37 form a necessary for its localzation to the endoplasmic reticulum and lipid droplets region; it reads MVCIPCIVIPVLLWVYKRFLEPVLYPIISPIISRFWR. Residues 43 to 65 are compositionally biased toward polar residues; it reads DTPQQKTSTAECNGAANGSTANG. Residues 43–75 are disordered; sequence DTPQQKTSTAECNGAANGSTANGPKTVADKKAD.

This sequence belongs to the UPF0729 family.

It is found in the endoplasmic reticulum. Its subcellular location is the lipid droplet. The sequence is that of UPF0729 protein C18orf32 homolog from Danio rerio (Zebrafish).